The primary structure comprises 201 residues: Inner membrane protein YnbA (201 aa).

At 1-43 (MTLYQIKPLFQSLLRPTMFWLYKHHVTANHITLAALALSLLTG) the chain is on the periplasmic side. Residues 44–64 (LLLMLAAQPILFLLLPIVLFI) form a helical membrane-spanning segment. The Cytoplasmic portion of the chain corresponds to 65-84 (RMALNALDGMLARECNQQTR). The chain crosses the membrane as a helical span at residues 85–107 (LGAILNETGDVISDIALYLPFLF). Residues 108–116 (LPESNASLV) are Periplasmic-facing. The helical transmembrane segment at 117 to 139 (ILMLFCTILTEFCGLLAQTINGV) threads the bilayer. Residues 140–151 (RSYAGPFGKSDR) lie on the Cytoplasmic side of the membrane. A helical transmembrane segment spans residues 152–172 (ALIFGLWGLAVAIYPQWMQWN). Residues 173 to 175 (NLL) are Periplasmic-facing. The helical transmembrane segment at 176-196 (WSIASILLLWTAINRCRSVLL) threads the bilayer. At 197–201 (MSAEI) the chain is on the cytoplasmic side.

It is found in the cell inner membrane. This is Inner membrane protein YnbA (ynbA) from Escherichia coli (strain K12).